The chain runs to 270 residues: Glutamate racemase (270 aa).

Residues Asp-14 to Ser-15 and Tyr-46 to Gly-47 each bind substrate. Cys-77 (proton donor/acceptor) is an active-site residue. Asn-78–Thr-79 contributes to the substrate binding site. Residue Cys-189 is the Proton donor/acceptor of the active site. Thr-190–His-191 contacts substrate.

The protein belongs to the aspartate/glutamate racemases family.

The catalysed reaction is L-glutamate = D-glutamate. The protein operates within cell wall biogenesis; peptidoglycan biosynthesis. Provides the (R)-glutamate required for cell wall biosynthesis. The sequence is that of Glutamate racemase from Neisseria meningitidis serogroup A / serotype 4A (strain DSM 15465 / Z2491).